A 244-amino-acid polypeptide reads, in one-letter code: Probable transcriptional regulatory protein Xfasm12_1059 (244 aa).

This sequence belongs to the TACO1 family.

The protein localises to the cytoplasm. In Xylella fastidiosa (strain M12), this protein is Probable transcriptional regulatory protein Xfasm12_1059.